The primary structure comprises 31 residues: Cytochrome b6-f complex subunit 6 (31 aa).

A helical transmembrane segment spans residues 4–24 (ITSYFGFLLAALTITSALFIG).

This sequence belongs to the PetL family. The 4 large subunits of the cytochrome b6-f complex are cytochrome b6, subunit IV (17 kDa polypeptide, PetD), cytochrome f and the Rieske protein, while the 4 small subunits are PetG, PetL, PetM and PetN. The complex functions as a dimer.

It is found in the plastid. It localises to the chloroplast thylakoid membrane. Functionally, component of the cytochrome b6-f complex, which mediates electron transfer between photosystem II (PSII) and photosystem I (PSI), cyclic electron flow around PSI, and state transitions. PetL is important for photoautotrophic growth as well as for electron transfer efficiency and stability of the cytochrome b6-f complex. In Humulus lupulus (European hop), this protein is Cytochrome b6-f complex subunit 6.